A 340-amino-acid chain; its full sequence is Outer membrane protein U (340 aa).

The signal sequence occupies residues 1–21 (MKKTLIALSVSAAAVATGVNA).

The protein belongs to the Gram-negative porin family. Homotrimer.

The protein resides in the cell outer membrane. Functionally, forms pores that allow passive diffusion of small molecules across the outer membrane. In Vibrio vulnificus (strain CMCP6), this protein is Outer membrane protein U (ompU).